The sequence spans 297 residues: MARSILHMLTPLKHMSPFDVNMAIDAGFETLIPYTGVDLTDVVSLTQDSIFSRAPQDGVRTGIFIGGKNAELALDMVDRAKKAFVPPFVNHVFADPAGSFTTGAAMVAEVNRALKARFSTDLKGKRIVIFGGAGVVAYVAAVIGALEGAQTVLVGHDGEERVSKIAFTMKWRFGIDVGAVDGTLPEARRAAITDADVILSAGPAGVSILTAEDLESAPKLLVASDVNAVPPAGIAGIDVNAVDVPLPTGKGVGIGALAVGNVKYQTQCRMFRKMLEAQEPLCLDFRDAYKLAVEIAG.

This sequence to M.extorquens MtdA. Homohexamer.

It localises to the cytoplasm. It carries out the reaction 5,10-methylenetetrahydromethanopterin + NAD(+) = 5,10-methenyl-5,6,7,8-tetrahydromethanopterin + NADH. It catalyses the reaction 5,10-methylenetetrahydromethanopterin + NADP(+) = 5,10-methenyl-5,6,7,8-tetrahydromethanopterin + NADPH. It participates in one-carbon metabolism; formaldehyde degradation; formate from formaldehyde (H(4)MPT route): step 2/5. Catalyzes the dehydrogenation of methylene-H(4)MPT. In Methylorubrum extorquens (strain ATCC 14718 / DSM 1338 / JCM 2805 / NCIMB 9133 / AM1) (Methylobacterium extorquens), this protein is NAD(P)-dependent methylenetetrahydromethanopterin dehydrogenase (mtdB).